Reading from the N-terminus, the 245-residue chain is Thiopurine S-methyltransferase (245 aa).

29-40 (WQEKWVSRRIGF) is an S-adenosyl-L-methionine binding site. Position 40 (F40) interacts with substrate. K58 carries the N6-acetyllysine modification. S-adenosyl-L-methionine contacts are provided by L69, E90, and R152.

This sequence belongs to the class I-like SAM-binding methyltransferase superfamily. TPMT family. Monomer.

It is found in the cytoplasm. It catalyses the reaction S-adenosyl-L-methionine + a thiopurine = S-adenosyl-L-homocysteine + a thiopurine S-methylether.. The chain is Thiopurine S-methyltransferase (TPMT) from Lycaon pictus (African wild dog).